Consider the following 481-residue polypeptide: Alkaline protease secretion protein AprF (481 aa).

Positions 462–481 (PAPLHTLSKTDTEENRSALN) are disordered. Positions 469-481 (SKTDTEENRSALN) are enriched in basic and acidic residues.

The protein belongs to the outer membrane factor (OMF) (TC 1.B.17) family.

The protein localises to the cell outer membrane. Functionally, involved in the secretion of alkaline protease. The sequence is that of Alkaline protease secretion protein AprF (aprF) from Pseudomonas aeruginosa (strain ATCC 15692 / DSM 22644 / CIP 104116 / JCM 14847 / LMG 12228 / 1C / PRS 101 / PAO1).